Consider the following 112-residue polypeptide: Putative regulatory protein DP2861 (112 aa).

It belongs to the RemA family.

The polypeptide is Putative regulatory protein DP2861 (Desulfotalea psychrophila (strain LSv54 / DSM 12343)).